The chain runs to 693 residues: A disintegrin and metalloproteinase with thrombospondin motifs like (693 aa).

The signal sequence occupies residues 1-24 (MESSVATHWLSAFVILCSFITTQS). Residues 67 to 80 (IPTSHPANSNSADS) show a composition bias toward polar residues. Positions 67–91 (IPTSHPANSNSADSGKTPHLKTEKV) are disordered. N-linked (GlcNAc...) asparagine glycans are attached at residues Asn-124 and Asn-194. A Peptidase M12B domain is found at 353 to 585 (IYPEILVIVD…DTATCLYNSP (233 aa)). Intrachain disulfides connect Cys-485–Cys-580 and Cys-541–Cys-564. Residue His-514 coordinates Zn(2+). A Metal-binding motif is present at residues 514-525 (HEVGHLLGAVHD). The active site involves Glu-515. The Zn(2+) site is built by His-518 and His-524. N-linked (GlcNAc...) asparagine glycosylation occurs at Asn-687.

Zn(2+) is required as a cofactor.

It is found in the secreted. It localises to the extracellular space. Its subcellular location is the extracellular matrix. Involved in larval molting and metamorphosis. May degrade extracellular matrix (ECM) and basement membrane (BM) during the development of organs to allow degeneration and remodeling of tissues. The sequence is that of A disintegrin and metalloproteinase with thrombospondin motifs like from Bombyx mori (Silk moth).